We begin with the raw amino-acid sequence, 624 residues long: ATP-dependent zinc metalloprotease FtsH (624 aa).

The Cytoplasmic segment spans residues 1-7; sequence MPRAPFS. The chain crosses the membrane as a helical span at residues 8–28; sequence LLALVLGLAFLAWAFSLAGTV. Residues 29 to 103 are Periplasmic-facing; it reads GAPSGTVNYT…VRVEPPQGQN (75 aa). A helical membrane pass occupies residues 104–124; sequence ALGFLWPLLLVGLLIGALYYF. At 125–624 the chain is on the cytoplasmic side; it reads SRNGRAGPSD…VKPGGALGGA (500 aa). ATP-binding positions include A159, 199–203, and H204; that span reads GVGKT. Position 418 (H418) interacts with Zn(2+). The active site involves E419. The Zn(2+) site is built by H422 and D493. A disordered region spans residues 595-624; sequence PLEAPEEAREEREPPRVVPKVKPGGALGGA. The span at 600-609 shows a compositional bias: basic and acidic residues; that stretch reads EEAREEREPP.

It in the central section; belongs to the AAA ATPase family. In the C-terminal section; belongs to the peptidase M41 family. In terms of assembly, the isolated soluble domain (residues 126-624) forms a stable hexamer in which the AAA+ domains (residues 126-400) are alternatively open or closed. The cofactor is Zn(2+).

The protein resides in the cell inner membrane. Its activity is regulated as follows. The proteolytic activity is dependent on ATP, both the ATPase and protease activities are inhibited by ADP. Functionally, acts as a processive, ATP-dependent zinc metallopeptidase for both cytoplasmic and membrane proteins. Plays a role in the quality control of integral membrane proteins. Degrades preferentially unfolded substrates in a processive, ATP-dependent manner, usually after hydrophobic residues. This is ATP-dependent zinc metalloprotease FtsH from Thermus thermophilus (strain ATCC 27634 / DSM 579 / HB8).